Reading from the N-terminus, the 216-residue chain is Protein-L-isoaspartate O-methyltransferase (216 aa).

S63 is an active-site residue.

Belongs to the methyltransferase superfamily. L-isoaspartyl/D-aspartyl protein methyltransferase family.

The protein resides in the cytoplasm. The catalysed reaction is [protein]-L-isoaspartate + S-adenosyl-L-methionine = [protein]-L-isoaspartate alpha-methyl ester + S-adenosyl-L-homocysteine. Functionally, catalyzes the methyl esterification of L-isoaspartyl residues in peptides and proteins that result from spontaneous decomposition of normal L-aspartyl and L-asparaginyl residues. It plays a role in the repair and/or degradation of damaged proteins. In Rhodopseudomonas palustris (strain BisB18), this protein is Protein-L-isoaspartate O-methyltransferase.